Reading from the N-terminus, the 59-residue chain is MKEGTKEEMEGKFSKAKGEIKESAGEMTGDIEMEAKGEAEKRKGEAQEKVGKIRKEFEK.

2 stretches are compositionally biased toward basic and acidic residues: residues 1–24 and 33–59; these read MKEGTKEEMEGKFSKAKGEIKESA and MEAKGEAEKRKGEAQEKVGKIRKEFEK. Residues 1-59 are disordered; that stretch reads MKEGTKEEMEGKFSKAKGEIKESAGEMTGDIEMEAKGEAEKRKGEAQEKVGKIRKEFEK.

This sequence belongs to the UPF0337 (CsbD) family.

This Methanosarcina mazei (strain ATCC BAA-159 / DSM 3647 / Goe1 / Go1 / JCM 11833 / OCM 88) (Methanosarcina frisia) protein is UPF0337 protein MM_2677.